The primary structure comprises 376 residues: Beta-centractin (376 aa).

The residue at position 1 (M1) is an N-acetylmethionine. At Y4 the chain carries 3'-nitrotyrosine.

Belongs to the actin family. ARP1 subfamily.

The protein localises to the cytoplasm. Its subcellular location is the cytoskeleton. It localises to the microtubule organizing center. The protein resides in the centrosome. Functionally, component of a multi-subunit complex involved in microtubule based vesicle motility. It is associated with the centrosome. The chain is Beta-centractin (ACTR1B) from Homo sapiens (Human).